The following is a 796-amino-acid chain: Serine/threonine-protein kinase ATG1 (796 aa).

One can recognise a Protein kinase domain in the interval 9-304; that stretch reads YVVGAEIGRG…FQEFFNDPVI (296 aa). ATP-binding positions include 15–23 and K38; that span reads IGRGSFANV. The active-site Proton acceptor is the D155. Over residues 360–370 the composition is skewed to acidic residues; sequence LEEEDEEEDQD. Disordered regions lie at residues 360 to 382, 389 to 408, and 450 to 480; these read LEEE…IQHM, LLNK…RREL, and PYTR…KVPI. Polar residues predominate over residues 389–403; that stretch reads LLNKTTQKQTEVQSQ. The segment covering 453-470 has biased composition (low complexity); the sequence is RRYSSSSRSSSTGSNQRR.

The protein belongs to the protein kinase superfamily. Ser/Thr protein kinase family. APG1/unc-51/ULK1 subfamily. Homodimer. Forms a ternary complex with ATG13 and ATG17.

Its subcellular location is the cytoplasm. The protein resides in the preautophagosomal structure membrane. The catalysed reaction is L-seryl-[protein] + ATP = O-phospho-L-seryl-[protein] + ADP + H(+). It catalyses the reaction L-threonyl-[protein] + ATP = O-phospho-L-threonyl-[protein] + ADP + H(+). Its function is as follows. Serine/threonine protein kinase involved in the cytoplasm to vacuole transport (Cvt) and found to be essential in autophagy, where it is required for the formation of autophagosomes. Involved in the clearance of protein aggregates which cannot be efficiently cleared by the proteasome. Required for selective autophagic degradation of the nucleus (nucleophagy) as well as for mitophagy which contributes to regulate mitochondrial quantity and quality by eliminating the mitochondria to a basal level to fulfill cellular energy requirements and preventing excess ROS production. Also involved in endoplasmic reticulum-specific autophagic process, in selective removal of ER-associated degradation (ERAD) substrates. Plays a key role in ATG9 and ATG23 cycling through the pre-autophagosomal structure and is necessary to promote ATG18 binding to ATG9 through phosphorylation of ATG9. Catalyzes phosphorylation of ATG4, decreasing the interaction between ATG4 and ATG8 and impairing deconjugation of PE-conjugated forms of ATG8. The chain is Serine/threonine-protein kinase ATG1 from Komagataella pastoris (Yeast).